A 396-amino-acid chain; its full sequence is Argininosuccinate synthase (396 aa).

Position 9–17 (9–17 (AYSGGLDTS)) interacts with ATP. Tyr85 is a binding site for L-citrulline. Gly115 provides a ligand contact to ATP. L-aspartate-binding residues include Thr117, Asn121, and Asp122. Asn121 is a binding site for L-citrulline. Residues Arg125, Ser173, Glu258, and Tyr270 each coordinate L-citrulline.

Belongs to the argininosuccinate synthase family. Type 1 subfamily. Homotetramer.

It localises to the cytoplasm. The catalysed reaction is L-citrulline + L-aspartate + ATP = 2-(N(omega)-L-arginino)succinate + AMP + diphosphate + H(+). It functions in the pathway amino-acid biosynthesis; L-arginine biosynthesis; L-arginine from L-ornithine and carbamoyl phosphate: step 2/3. The protein is Argininosuccinate synthase of Streptococcus agalactiae serotype Ia (strain ATCC 27591 / A909 / CDC SS700).